The chain runs to 361 residues: Phosphoserine aminotransferase (361 aa).

L-glutamate-binding residues include S9 and R42. Residues 76 to 77 (AR), W102, T153, D173, and Q196 contribute to the pyridoxal 5'-phosphate site. An N6-(pyridoxal phosphate)lysine modification is found at K197. 238 to 239 (NT) is a pyridoxal 5'-phosphate binding site.

This sequence belongs to the class-V pyridoxal-phosphate-dependent aminotransferase family. SerC subfamily. In terms of assembly, homodimer. Pyridoxal 5'-phosphate serves as cofactor.

Its subcellular location is the cytoplasm. It carries out the reaction O-phospho-L-serine + 2-oxoglutarate = 3-phosphooxypyruvate + L-glutamate. The enzyme catalyses 4-(phosphooxy)-L-threonine + 2-oxoglutarate = (R)-3-hydroxy-2-oxo-4-phosphooxybutanoate + L-glutamate. The protein operates within amino-acid biosynthesis; L-serine biosynthesis; L-serine from 3-phospho-D-glycerate: step 2/3. It participates in cofactor biosynthesis; pyridoxine 5'-phosphate biosynthesis; pyridoxine 5'-phosphate from D-erythrose 4-phosphate: step 3/5. Functionally, catalyzes the reversible conversion of 3-phosphohydroxypyruvate to phosphoserine and of 3-hydroxy-2-oxo-4-phosphonooxybutanoate to phosphohydroxythreonine. The sequence is that of Phosphoserine aminotransferase from Erwinia tasmaniensis (strain DSM 17950 / CFBP 7177 / CIP 109463 / NCPPB 4357 / Et1/99).